The following is a 513-amino-acid chain: Na(+)/H(+) antiporter NhaB (513 aa).

12 consecutive transmembrane segments (helical) span residues 21 to 41, 64 to 84, 88 to 108, 119 to 139, 143 to 163, 202 to 222, 243 to 263, 299 to 318, 322 to 344, 350 to 370, 389 to 409, and 477 to 497; these read ICII…SPFV, QPGG…AHHV, IMAN…IYFM, LLIV…SATF, FLDA…FYGV, LLMH…VGEP, LPVS…LEHF, MGIQ…LHLA, IIGL…HAIG, PMPF…IVDL, LALF…VFVG, and MALP…EFLL.

This sequence belongs to the NhaB Na(+)/H(+) (TC 2.A.34) antiporter family.

The protein localises to the cell inner membrane. It catalyses the reaction 2 Na(+)(in) + 3 H(+)(out) = 2 Na(+)(out) + 3 H(+)(in). Functionally, na(+)/H(+) antiporter that extrudes sodium in exchange for external protons. In Actinobacillus pleuropneumoniae serotype 3 (strain JL03), this protein is Na(+)/H(+) antiporter NhaB.